A 179-amino-acid polypeptide reads, in one-letter code: Inner membrane-spanning protein YciB (179 aa).

The next 5 membrane-spanning stretches (helical) occupy residues 22–42 (IYAA…YSWV), 50–70 (MALI…FFHN), 76–96 (WKVT…QWVM), 121–141 (LAWA…AFWL), and 149–169 (FKVF…GIYI).

Belongs to the YciB family.

It is found in the cell inner membrane. In terms of biological role, plays a role in cell envelope biogenesis, maintenance of cell envelope integrity and membrane homeostasis. This chain is Inner membrane-spanning protein YciB, found in Klebsiella pneumoniae (strain 342).